A 341-amino-acid polypeptide reads, in one-letter code: MAVSVTPIRDTKWLTLEVCREFQRGTCSRPDTECKFAHPSKSCQVENGRVIACFDSLKGRCSRENCKYLHPPPHLKTQLEINGRNNLIQQKNMAMLAQQMQLANAMMPGAPLQPVPMFSVAPSLATSASAAFNPYLGPVSPSLVPAEILPTAPMLVTGNPGVPVPAAAAAAAQKLMRTDRLEVCREYQRGNCNRGENDCRFAHPADSTMIDTNDNTVTVCMDYIKGRCSREKCKYFHPPAHLQAKIKAAQYQVNQAAAAQAAATAAAMGIPQAVLPPLPKRPALEKTNGATAVFNTGIFQYQQALANMQLQQHTAFLPPGSILCMTPATSVDTHNICRTSD.

Threonine 6 carries the phosphothreonine modification. C3H1-type zinc fingers lie at residues 13 to 41, 47 to 73, 178 to 206, and 214 to 240; these read WLTL…HPSK, NGRV…HPPP, TDRL…HPAD, and DNTV…HPPA.

This sequence belongs to the muscleblind family. Interacts with DDX1 and YBX1. Interacts with HNRNPH1; the interaction in RNA-independent. Interacts with RBPMS; the interaction allows cooperative assembly of RNA-bound stable cell-specific alternative splicing regulatory complexes. Highly expressed in cardiac and skeletal muscle. Weakly expressed in heart and eye (at protein level).

It localises to the nucleus. Its subcellular location is the cytoplasm. The protein localises to the cytoplasmic granule. In terms of biological role, mediates pre-mRNA alternative splicing regulation. Acts either as activator or repressor of splicing on specific pre-mRNA targets. Inhibits cardiac troponin-T (TNNT2) pre-mRNA exon inclusion but induces insulin receptor (IR) pre-mRNA exon inclusion in muscle. Antagonizes the alternative splicing activity pattern of CELF proteins. Regulates the TNNT2 exon 5 skipping through competition with U2AF2. Inhibits the formation of the spliceosome A complex on intron 4 of TNNT2 pre-mRNA. Binds to the stem-loop structure within the polypyrimidine tract of TNNT2 intron 4 during spliceosome assembly. Binds to the 5'-YGCU(U/G)Y-3'consensus sequence. Binds to the IR RNA. Binds to CUG triplet repeat expansion in myotonic dystrophy muscle cells by sequestering the target RNAs. Together with RNA binding proteins RBPMS and RBFOX2, activates vascular smooth muscle cells alternative splicing events. Regulates NCOR2 alternative splicing. The protein is Muscleblind-like protein 1 (Mbnl1) of Mus musculus (Mouse).